The primary structure comprises 594 residues: MAKVDTSHRLAELRKLMKERNVDIYTYISGFTGSAGYAVITHDKAALSTDGRYFNQAEKQLDSNWELLKQGIQDVPTIQEWTADQAEGGKVVGVDPSVVTAGDARKLAEKIKKKGGEYKAIDENLVDLVWSSERPARPSEKVIVQPERYACKGFEDKIDDLRKELEKKKSLGFVVSMLDEVAWLFNLRGSDIPYNPVFFSYAVVTPTAATLYVDENKLPEDVKEHLGNKITIRPYEAIFGDVTALSKELFEASDKNETQKKFLTSNRASWALNKALGGDDKVEETRSPVGDSKAVKNEVELEGMRQCHIRDGAALSEYFAWLEDQLINKKATLDEVDGADKLEEIRKKHDMFMGLSFDTISSTGANAAVIHYKPEKGECATIDPKAIYLCDSGAQYRDGTTDTTRTLHFTEPTEMERKAYTLVLKGNMALERVKFPKGTTGFALDALARQFLWAEGLDYRHGTGHGVGSFLNVHEGPIGIGTRVQYSEVSLAVGNVVSDEPGYYEDGKFGIRIENMVMVKEVETKHKFGDKPYLGFEHVTMTPHCRNLVDMSLLTEDEKKFINEYHKEVYEKTSKYFENDALTLEWLKRETAPY.

Positions 391, 402, 500, and 514 each coordinate Mn(2+).

The protein belongs to the peptidase M24B family. Mn(2+) serves as cofactor.

The catalysed reaction is Release of any N-terminal amino acid, including proline, that is linked to proline, even from a dipeptide or tripeptide.. Catalyzes the removal of a penultimate prolyl residue from the N-termini of peptides. The polypeptide is Probable Xaa-Pro aminopeptidase P (ampp) (Pyrenophora tritici-repentis (strain Pt-1C-BFP) (Wheat tan spot fungus)).